Consider the following 814-residue polypeptide: Syn-copalyl diphosphate synthase TPS3, chloroplastic (814 aa).

A chloroplast-targeting transit peptide spans 1 to 52 (MCSLSTLSPNFSNAYGSKSVSSTASRFPCWQRSNETWKTQSREVIHWTYVVR). Lysine 248 contributes to the substrate binding site. Mg(2+) is bound by residues aspartate 386 and aspartate 388. The DXDD motif motif lies at 386 to 389 (DIDD). Position 472 (lysine 472) interacts with substrate.

Belongs to the terpene synthase family. The cofactor is Mg(2+). In terms of tissue distribution, mostly expressed in trichomes of leaves and fruits.

It is found in the plastid. The protein localises to the chloroplast. It carries out the reaction (2E,6E,10E)-geranylgeranyl diphosphate = 9alpha-copalyl diphosphate. It functions in the pathway secondary metabolite biosynthesis; terpenoid biosynthesis. Functionally, involved in the biosynthesis of labdane-type diterpenoid including cleroda-dienols, and peregrinol lactones and furan derivatives, dopaminergic diterpenoids that can bind to dopamine receptors in the human pituitary gland, have probably ability to lower prolactin levels, and are used to treat menstrual cycle disorders (e.g. premenstrual syndrome and mastodynia). Terpene synthase that produces syn-copalyl diphosophate from geranylgeranyl diphosphate (GGPP). The protein is Syn-copalyl diphosphate synthase TPS3, chloroplastic of Vitex agnus-castus (Chaste tree).